Consider the following 2524-residue polypeptide: Highly reducing polyketide synthase Preu5 (2524 aa).

In terms of domain architecture, Ketosynthase family 3 (KS3) spans 5-426 (DTPIAIIGLS…GSNSAIVIEK (422 aa)). Active-site for beta-ketoacyl synthase activity residues include Cys175, His310, and His350. Residues 431–470 (DELGHETNGTNGVSVSNGVNGSNGFTNGSNGTNGHAENGN) form a disordered region. Positions 437–464 (TNGTNGVSVSNGVNGSNGFTNGSNGTNG) are enriched in low complexity. The tract at residues 559–882 (VFTGQGAQYA…TYLPSLVRNV (324 aa)) is malonyl-CoA:ACP transacylase (MAT) domain. Residue Ser648 is the For malonyltransferase activity of the active site. The N-terminal hotdog fold stretch occupies residues 950–1084 (HELLGRRVVS…GQIEPEFADM (135 aa)). The PKS/mFAS DH domain occupies 950–1264 (HELLGRRVVS…FRNIGSADEN (315 aa)). The segment at 950–1266 (HELLGRRVVS…NIGSADENID (317 aa)) is dehydratase (DH) domain. Residue His982 is the Proton acceptor; for dehydratase activity of the active site. The segment at 1102-1264 (ADLLEHDIEG…FRNIGSADEN (163 aa)) is C-terminal hotdog fold. Asp1171 (proton donor; for dehydratase activity) is an active-site residue. The tract at residues 1418-1611 (SQAVGDLADN…IPGVWDSEVQ (194 aa)) is methyltransferase (CMet) domain. The interval 1825–2139 (GSPDSIYFRR…SGDHLGKIVV (315 aa)) is enoylreductase (ER) domain. The segment at 2164 to 2339 (GTYLVTGGTR…HTVSIALPIV (176 aa)) is ketoreductase (KR) domain. Residues 2445–2522 (DPLEGLTEAL…ALATDILSQR (78 aa)) enclose the Carrier domain. At Ser2482 the chain carries O-(pantetheine 4'-phosphoryl)serine.

Pantetheine 4'-phosphate is required as a cofactor.

Highly reducing polyketide synthase; part of a gene cluster that mediates the biosynthesis of a yet unidentified natural product. The protein is Highly reducing polyketide synthase Preu5 of Preussia isomera (Coprophilous fungus).